The primary structure comprises 472 residues: Protein DML1 (472 aa).

The segment covering 441-463 has biased composition (basic and acidic residues); the sequence is GDEREEMKQELGDMASKYEHGWE. Residues 441-472 are disordered; it reads GDEREEMKQELGDMASKYEHGWEEESDDDDDY.

It belongs to the misato family.

Its subcellular location is the mitochondrion. Involved in the partitioning of the mitochondrial organelle and mitochondrial DNA (mtDNA) inheritance. The polypeptide is Protein DML1 (DML1) (Yarrowia lipolytica (strain CLIB 122 / E 150) (Yeast)).